A 687-amino-acid chain; its full sequence is Polyphosphate kinase (687 aa).

N45 contributes to the ATP binding site. R375 and R405 together coordinate Mg(2+). The active-site Phosphohistidine intermediate is the H435. Residues Y472, R568, and H596 each coordinate ATP.

Belongs to the polyphosphate kinase 1 (PPK1) family. Mg(2+) serves as cofactor. In terms of processing, an intermediate of this reaction is the autophosphorylated ppk in which a phosphate is covalently linked to a histidine residue through a N-P bond.

It carries out the reaction [phosphate](n) + ATP = [phosphate](n+1) + ADP. Catalyzes the reversible transfer of the terminal phosphate of ATP to form a long-chain polyphosphate (polyP). The sequence is that of Polyphosphate kinase from Burkholderia lata (strain ATCC 17760 / DSM 23089 / LMG 22485 / NCIMB 9086 / R18194 / 383).